Consider the following 475-residue polypeptide: tRNA-2-methylthio-N(6)-dimethylallyladenosine synthase (475 aa).

Residues 1–10 (MQETTVKRDG) are compositionally biased toward basic and acidic residues. Residues 1-22 (MQETTVKRDGASPSDAGTPATT) are disordered. Residues 27 to 144 (GKLYIRTFGC…LPDLIKRRRA (118 aa)) form the MTTase N-terminal domain. [4Fe-4S] cluster contacts are provided by cysteine 36, cysteine 73, cysteine 107, cysteine 181, cysteine 185, and cysteine 188. The Radical SAM core domain maps to 167–400 (RVDGATAFVS…QALINQQAAA (234 aa)). The 64-residue stretch at 403–466 (QGMIGTRQRV…TNSLRGRVAG (64 aa)) folds into the TRAM domain.

The protein belongs to the methylthiotransferase family. MiaB subfamily. As to quaternary structure, monomer. Requires [4Fe-4S] cluster as cofactor.

Its subcellular location is the cytoplasm. It carries out the reaction N(6)-dimethylallyladenosine(37) in tRNA + (sulfur carrier)-SH + AH2 + 2 S-adenosyl-L-methionine = 2-methylsulfanyl-N(6)-dimethylallyladenosine(37) in tRNA + (sulfur carrier)-H + 5'-deoxyadenosine + L-methionine + A + S-adenosyl-L-homocysteine + 2 H(+). Its function is as follows. Catalyzes the methylthiolation of N6-(dimethylallyl)adenosine (i(6)A), leading to the formation of 2-methylthio-N6-(dimethylallyl)adenosine (ms(2)i(6)A) at position 37 in tRNAs that read codons beginning with uridine. The sequence is that of tRNA-2-methylthio-N(6)-dimethylallyladenosine synthase from Bordetella bronchiseptica (strain ATCC BAA-588 / NCTC 13252 / RB50) (Alcaligenes bronchisepticus).